The primary structure comprises 348 residues: NADH-quinone oxidoreductase subunit H (348 aa).

A run of 9 helical transmembrane segments spans residues 13 to 33 (LIMV…IAFL), 50 to 70 (PNVV…KFIL), 82 to 102 (AVFL…YAVI), 115 to 135 (VGIL…IMGG), 161 to 181 (IGLV…TDIV), 198 to 218 (FLDW…ISGL), 258 to 278 (AIVL…LPIV), 285 to 305 (WVPG…MIAL), and 321 to 341 (LGWK…AFVL).

Belongs to the complex I subunit 1 family. As to quaternary structure, NDH-1 is composed of 14 different subunits. Subunits NuoA, H, J, K, L, M, N constitute the membrane sector of the complex.

The protein resides in the cell inner membrane. The enzyme catalyses a quinone + NADH + 5 H(+)(in) = a quinol + NAD(+) + 4 H(+)(out). Functionally, NDH-1 shuttles electrons from NADH, via FMN and iron-sulfur (Fe-S) centers, to quinones in the respiratory chain. The immediate electron acceptor for the enzyme in this species is believed to be ubiquinone. Couples the redox reaction to proton translocation (for every two electrons transferred, four hydrogen ions are translocated across the cytoplasmic membrane), and thus conserves the redox energy in a proton gradient. This subunit may bind ubiquinone. This Agrobacterium fabrum (strain C58 / ATCC 33970) (Agrobacterium tumefaciens (strain C58)) protein is NADH-quinone oxidoreductase subunit H.